The primary structure comprises 971 residues: Reversion-inducing cysteine-rich protein with Kazal motifs (971 aa).

The N-terminal stretch at 1–22 is a signal peptide; sequence MASVRASPRSALLLLLAAAGVA. The Knot 1 repeat unit spans residues 37–84; the sequence is CCNHSKDNQMCRDVCEQIFSSKSESRLKHLLQRAPDYCPETMVEIWSC. The 5 X Knot repeats stretch occupies residues 37 to 338; the sequence is CCNHSKDNQM…NPVEVSMLTC (302 aa). 2 N-linked (GlcNAc...) asparagine glycosylation sites follow: N39 and N86. Knot repeat units lie at residues 104–141 and 151–197; these read CCELAIGLECRQACKQASSKNDISKVCRKEYENALFSC and CCSY…LIHC. Residue N200 is glycosylated (N-linked (GlcNAc...) asparagine). Knot repeat units lie at residues 216 to 263 and 292 to 338; these read CCDR…LWQC and CCSK…MLTC. N-linked (GlcNAc...) asparagine glycans are attached at residues N297 and N352. 3 Kazal-like domains span residues 627–673, 698–752, and 753–789; these read TFTG…PCIS, TFDK…PCQP, and FCRAKEPVCGHNGETYSSVCAAYSDRVAVDYYGPCQA. Disulfide bonds link C633/C658, C635/C654, C643/C671, C716/C735, C724/C750, and C761/C787. A Kazal-like 2; degenerate domain is found at 704–750; the sequence is CSQYECVPRQLTCDQARDPVCDTDHMEHSNLCTLYQRGKSLSYRGPC. The GPI-anchor amidated serine moiety is linked to residue S942. The propeptide at 943-971 is removed in mature form; that stretch reads SAVVGRPLFHSLLLLLSLGLTVHLLWTRP.

Belongs to the RECK family. As to quaternary structure, interacts (via knot repeats) with WNT7A (via disordered linker region); the interaction is direct. Interacts (via knot repeats) with WNT7B (via disordered linker region); the interaction is direct. Interacts with ADGRA2; the interaction is direct. Interacts with MMP9.

It is found in the cell membrane. Functionally, functions together with ADGRA2 to enable brain endothelial cells to selectively respond to Wnt7 signals (WNT7A or WNT7B). Plays a key role in Wnt7-specific responses: required for central nervous system (CNS) angiogenesis and blood-brain barrier regulation. Acts as a Wnt7-specific coactivator of canonical Wnt signaling by decoding Wnt ligands: acts by interacting specifically with the disordered linker region of Wnt7, thereby conferring ligand selectivity for Wnt7. ADGRA2 is then required to deliver RECK-bound Wnt7 to frizzled by assembling a higher-order RECK-ADGRA2-Fzd-LRP5-LRP6 complex. Also acts as a serine protease inhibitor: negatively regulates matrix metalloproteinase-9 (MMP9) by suppressing MMP9 secretion and by direct inhibition of its enzymatic activity. Also inhibits metalloproteinase activity of MMP2 and MMP14 (MT1-MMP). In Mus musculus (Mouse), this protein is Reversion-inducing cysteine-rich protein with Kazal motifs.